We begin with the raw amino-acid sequence, 609 residues long: MSEVHQESEVEYSRWKRERSPERSQRRSQSPPGEQSAYHRERSPLRKRGNYYDDRTRASGPYPTFTKPLIDPYTQTNAVSYERFIRWYSKENHISATTEDLYNSLHGTYNNYKQDLYARTARSFVESHCDEAWFEDSYWVDESQGRVLEVSENEKSYRRALYDKFMDRLDAGYYDDFQLPTAEDVIEKPSIPDNDTDDSILPSNDPQLSKWNQDSRNDAMENTLLVSHVLPNISVAQIHNALDGISFVQHFSLSTINLIKNDERSLWVHFKAGTNMDGAKEAVDGIQLDSNFTIESENPKIPTHTHPIPIFEIASSEQTCKNLLEKLIRFIDRASTKYSLPNDAAQRIEDRLKTHASMKDDDDKPTNFHDIRLSDLYAEYLRQVATFDFWTSKEYESLIALLQDSPAGYSRKKFNPSKEVGQEENIWLSDLENNFACLLEPENVDIKAKGALPVEDFINNELDSVIMKEDEQKYRCHVGTCAKLFLGPEFVRKHINKKHKDWLDHIKKVAICLYGYVLDPCRAMDPKVVSTSYVSLQILNKPYVGFRNINANYTFPTTSYSRRNDEEITSGASSQKSYSRQEPMIHRREFYRTYQDLDAPNQEVPELDY.

Basic and acidic residues predominate over residues 1–25 (MSEVHQESEVEYSRWKRERSPERSQ). Disordered stretches follow at residues 1–60 (MSEV…RASG) and 187–210 (EKPS…QLSK). Over residues 27-36 (RSQSPPGEQS) the composition is skewed to low complexity. A phosphoserine mark is found at Ser-28 and Ser-30. A compositionally biased stretch (basic and acidic residues) spans 37 to 57 (AYHRERSPLRKRGNYYDDRTR). Residues 201 to 210 (LPSNDPQLSK) show a composition bias toward polar residues. The segment at 474–499 (YRCHVGTCAKLFLGPEFVRKHINKKH) adopts a C2H2-type zinc-finger fold.

The protein belongs to the ARS2 family. In terms of assembly, interacts with ccr4.

It localises to the nucleus. The polypeptide is NURS complex subunit pir2 (Schizosaccharomyces pombe (strain 972 / ATCC 24843) (Fission yeast)).